A 126-amino-acid chain; its full sequence is Muscarinic acetylcholine receptor M4 (126 aa).

Residues 1-90 form a disordered region; it reads MKQSVKKPPP…LQPRTLNPAS (90 aa). The Cytoplasmic segment spans residues 1–126; sequence MKQSVKKPPP…PAGMRPAANV (126 aa). Pro residues predominate over residues 28–39; that stretch reads APPPVLPPPPRP. Polar residues predominate over residues 47-57; the sequence is NESSSGSATQN. The span at 64-75 shows a compositional bias: low complexity; it reads TELSTTEATTPA.

It belongs to the G-protein coupled receptor 1 family. Muscarinic acetylcholine receptor subfamily. CHRM4 sub-subfamily.

Its subcellular location is the cell membrane. The protein localises to the postsynaptic cell membrane. Functionally, the muscarinic acetylcholine receptor mediates various cellular responses, including inhibition of adenylate cyclase, breakdown of phosphoinositides and modulation of potassium channels through the action of G proteins. Primary transducing effect is inhibition of adenylate cyclase. May couple to multiple functional responses in cell lines. The sequence is that of Muscarinic acetylcholine receptor M4 (CHRM4) from Bos taurus (Bovine).